The chain runs to 825 residues: Glycerol-3-phosphate acyltransferase (825 aa).

Residues cysteine 306–methionine 311 carry the HXXXXD motif motif. The tract at residues serine 802–glycine 825 is disordered.

This sequence belongs to the GPAT/DAPAT family.

Its subcellular location is the cell inner membrane. The enzyme catalyses sn-glycerol 3-phosphate + an acyl-CoA = a 1-acyl-sn-glycero-3-phosphate + CoA. It participates in phospholipid metabolism; CDP-diacylglycerol biosynthesis; CDP-diacylglycerol from sn-glycerol 3-phosphate: step 1/3. This Pectobacterium atrosepticum (strain SCRI 1043 / ATCC BAA-672) (Erwinia carotovora subsp. atroseptica) protein is Glycerol-3-phosphate acyltransferase.